Here is a 164-residue protein sequence, read N- to C-terminus: MKLNEIQDNPGSSKSRMRVGRGIGSGKGKTCGRGVKGQKARTGVAIKGFEGGQMPLHRRLPKRGFYNPFGLDYNEINLGRLQEAVDAGRIDVAAVVTNESLIASGLISKPRDGVKILGVGELKAKLSFQVAAASKSAVAAIEAAGGSIELLKRAPEAPTASAEA.

Polar residues predominate over residues 1-14; sequence MKLNEIQDNPGSSK. Residues 1–35 are disordered; it reads MKLNEIQDNPGSSKSRMRVGRGIGSGKGKTCGRGV. Gly residues predominate over residues 21–35; sequence RGIGSGKGKTCGRGV.

This sequence belongs to the universal ribosomal protein uL15 family. Part of the 50S ribosomal subunit.

Its function is as follows. Binds to the 23S rRNA. The sequence is that of Large ribosomal subunit protein uL15 from Methylocella silvestris (strain DSM 15510 / CIP 108128 / LMG 27833 / NCIMB 13906 / BL2).